Consider the following 427-residue polypeptide: Phosphoribosylamine--glycine ligase (427 aa).

An ATP-grasp domain is found at 110-315 (KDFCQRHGLP…IVPILLAAAK (206 aa)). Residue 136 to 196 (LDTLEAPFVI…EEFMHGEEAS (61 aa)) coordinates ATP. Glutamate 285 and asparagine 287 together coordinate Mg(2+).

This sequence belongs to the GARS family. Requires Mg(2+) as cofactor. It depends on Mn(2+) as a cofactor.

It catalyses the reaction 5-phospho-beta-D-ribosylamine + glycine + ATP = N(1)-(5-phospho-beta-D-ribosyl)glycinamide + ADP + phosphate + H(+). The protein operates within purine metabolism; IMP biosynthesis via de novo pathway; N(1)-(5-phospho-D-ribosyl)glycinamide from 5-phospho-alpha-D-ribose 1-diphosphate: step 2/2. The protein is Phosphoribosylamine--glycine ligase of Caulobacter vibrioides (strain ATCC 19089 / CIP 103742 / CB 15) (Caulobacter crescentus).